Consider the following 143-residue polypeptide: Nucleoside diphosphate kinase (143 aa).

ATP is bound by residues Lys11, Phe59, Arg87, Thr93, Arg104, and Asn114. His117 acts as the Pros-phosphohistidine intermediate in catalysis.

This sequence belongs to the NDK family. Homotetramer. Mg(2+) is required as a cofactor.

It is found in the cytoplasm. It catalyses the reaction a 2'-deoxyribonucleoside 5'-diphosphate + ATP = a 2'-deoxyribonucleoside 5'-triphosphate + ADP. The catalysed reaction is a ribonucleoside 5'-diphosphate + ATP = a ribonucleoside 5'-triphosphate + ADP. Its function is as follows. Major role in the synthesis of nucleoside triphosphates other than ATP. The ATP gamma phosphate is transferred to the NDP beta phosphate via a ping-pong mechanism, using a phosphorylated active-site intermediate. The chain is Nucleoside diphosphate kinase from Shewanella woodyi (strain ATCC 51908 / MS32).